Here is a 602-residue protein sequence, read N- to C-terminus: Elongation factor 4 (602 aa).

A tr-type G domain is found at Lys-7 to Asp-189. GTP contacts are provided by residues Asp-19–Thr-24 and Asn-136–Asp-139.

This sequence belongs to the TRAFAC class translation factor GTPase superfamily. Classic translation factor GTPase family. LepA subfamily.

The protein localises to the cell membrane. It carries out the reaction GTP + H2O = GDP + phosphate + H(+). Required for accurate and efficient protein synthesis under certain stress conditions. May act as a fidelity factor of the translation reaction, by catalyzing a one-codon backward translocation of tRNAs on improperly translocated ribosomes. Back-translocation proceeds from a post-translocation (POST) complex to a pre-translocation (PRE) complex, thus giving elongation factor G a second chance to translocate the tRNAs correctly. Binds to ribosomes in a GTP-dependent manner. The protein is Elongation factor 4 of Clostridium botulinum (strain Kyoto / Type A2).